Consider the following 61-residue polypeptide: Large ribosomal subunit protein uL29 (61 aa).

It belongs to the universal ribosomal protein uL29 family.

This Nitratidesulfovibrio vulgaris (strain DSM 19637 / Miyazaki F) (Desulfovibrio vulgaris) protein is Large ribosomal subunit protein uL29.